Consider the following 104-residue polypeptide: Large ribosomal subunit protein uL24 (104 aa).

It belongs to the universal ribosomal protein uL24 family. As to quaternary structure, part of the 50S ribosomal subunit.

Its function is as follows. One of two assembly initiator proteins, it binds directly to the 5'-end of the 23S rRNA, where it nucleates assembly of the 50S subunit. Functionally, one of the proteins that surrounds the polypeptide exit tunnel on the outside of the subunit. The protein is Large ribosomal subunit protein uL24 of Clostridium botulinum (strain Eklund 17B / Type B).